Consider the following 1055-residue polypeptide: Auxin response factor 16 (1055 aa).

Residues 127–229 (FCKTLTASDT…QLLLGIRRAT (103 aa)) constitute a DNA-binding region (TF-B3). Disordered regions lie at residues 485-510 (PVMSQHQQQPHQLSQQQQVQPSQQSS), 532-565 (QEHLQRQQSQPAQQLKAASSLHSVEQHKLKEQTS), 585-609 (SQLQQLGLPKSPTHRQGLTGLPIAG), 701-720 (SDSIGQLKQSPSQQAPLNHM), and 732-769 (SHSALAESGDPSSSTAPSTSRISPINSLSRANQGSRNL). Low complexity-rich tracts occupy residues 488 to 510 (SQHQQQPHQLSQQQQVQPSQQSS) and 532 to 552 (QEHLQRQQSQPAQQLKAASSL). The span at 742 to 756 (PSSSTAPSTSRISPI) shows a compositional bias: low complexity. Residues 757 to 769 (NSLSRANQGSRNL) show a composition bias toward polar residues. One can recognise a PB1 domain in the interval 940–1024 (RTFTKVQKRG…KSIKILSAAE (85 aa)). The interval 1034 to 1055 (LGGVPPQTQACSASDDANAWRG) is disordered.

This sequence belongs to the ARF family. In terms of assembly, homodimers and heterodimers. Expressed in roots, culms, leaves and young panicles.

The protein localises to the nucleus. In terms of biological role, auxin response factors (ARFs) are transcriptional factors that bind specifically to the DNA sequence 5'-TGTCTC-3' found in the auxin-responsive promoter elements (AuxREs). This Oryza sativa subsp. japonica (Rice) protein is Auxin response factor 16 (ARF16).